The sequence spans 55 residues: ATP synthase protein 8 (55 aa).

A helical transmembrane segment spans residues L11–L31.

This sequence belongs to the ATPase protein 8 family. In terms of assembly, F-type ATPases have 2 components, CF(1) - the catalytic core - and CF(0) - the membrane proton channel.

It localises to the mitochondrion membrane. Mitochondrial membrane ATP synthase (F(1)F(0) ATP synthase or Complex V) produces ATP from ADP in the presence of a proton gradient across the membrane which is generated by electron transport complexes of the respiratory chain. F-type ATPases consist of two structural domains, F(1) - containing the extramembraneous catalytic core and F(0) - containing the membrane proton channel, linked together by a central stalk and a peripheral stalk. During catalysis, ATP synthesis in the catalytic domain of F(1) is coupled via a rotary mechanism of the central stalk subunits to proton translocation. Part of the complex F(0) domain. Minor subunit located with subunit a in the membrane. The sequence is that of ATP synthase protein 8 (MT-ATP8) from Albinaria caerulea (Land snail).